A 316-amino-acid polypeptide reads, in one-letter code: Large ribosomal subunit protein uL4 (316 aa).

Residues 1–211 (MASCVVKNWQ…EQLKARWGSD (211 aa)) form a large ribosomal subunit protein uL4 region. Disordered regions lie at residues 44-76 (ARQGNAHTKTRAEVRGGGRKPWKQKGTGRARAG) and 231-316 (EDQA…ESDD). Over residues 60–71 (GGRKPWKQKGTG) the composition is skewed to basic residues. Residues 212–316 (AAPAVLETPS…TAPAEEESDD (105 aa)) form a unknown region. The span at 255 to 270 (QTPAQPEAQENQAALQ) shows a compositional bias: low complexity. 2 stretches are compositionally biased toward acidic residues: residues 281–291 (EQTEEPQDPAE) and 301–316 (TVEEAETAPAEEESDD).

This sequence belongs to the universal ribosomal protein uL4 family. As to quaternary structure, part of the 50S ribosomal subunit.

Functionally, one of the primary rRNA binding proteins, this protein initially binds near the 5'-end of the 23S rRNA. It is important during the early stages of 50S assembly. It makes multiple contacts with different domains of the 23S rRNA in the assembled 50S subunit and ribosome. Its function is as follows. Forms part of the polypeptide exit tunnel. In Synechococcus sp. (strain JA-2-3B'a(2-13)) (Cyanobacteria bacterium Yellowstone B-Prime), this protein is Large ribosomal subunit protein uL4.